A 464-amino-acid chain; its full sequence is MQYLCQRCHSLINFKDVYDDDLLKLKNLPKSRFVQASSLTEMNESGESDDQMNSSSEDYPAQRLQLYKKTISEGDYNFDNVPPPELRTPTLDSFVVLPAAKDGYEEEKNSPEEVNDLFSWKIEIYNRIFDLLSSKTKVDHPLCVECAELLTEEMSKTLRALKEEKKMYFNYDNFLSSQTVHEENTAALDSEIDELMKQINEKEEKIEEISDETDKLQKLLRELDEEKEKVYAEEQEFYNNLNQFQIKKLSLERQYDCANLEFEHNSRKLEKLQKMNVFSDIFYISHYSEPNGEGSIATINGLRLGRLPSQKVNWAEINAAWGMTVLLLDVLTEKLDFHSSSYQLKPFGSQSFIIRFDRDPNGNQVKPTKLDLFSSGELKIFMNRRFDQGMVAFLDYLHQFGDFCAAKTPSAVLPYAIENDRIGGKCIRLAFNQDENWTRALKFVLTDIKFLEAYVSSQDKQSNF.

The disordered stretch occupies residues 38-57; sequence SLTEMNESGESDDQMNSSSE. Positions 144–274 form a coiled coil; it reads VECAELLTEE…NSRKLEKLQK (131 aa). The BARA stretch occupies residues 275-461; the sequence is MNVFSDIFYI…EAYVSSQDKQ (187 aa).

It belongs to the beclin family. In terms of assembly, component of the autophagy-specific vps34 PI3-kinase complex I composed of vps15, atg6, pik3/vps34, atg14 and atg38. Also a component of the vps34 PI3-kinase complex II composed of atg6, pik3, vps15 and vps38.

It localises to the endosome membrane. The protein resides in the vacuole membrane. It is found in the preautophagosomal structure membrane. The protein localises to the cytoplasm. In terms of biological role, functions as a part of the autophagy-specific VPS34 PI3-kinase complex I that plays a role in autophagosome assembly. This complex is essential to recruit the atg8-phosphatidylinositol conjugate and the atg12-atg5 conjugate to the pre-autophagosomal structure. Also functions as part of the VPS34 PI3-kinase complex II. In Schizosaccharomyces pombe (strain 972 / ATCC 24843) (Fission yeast), this protein is Vacuolar protein sorting-associated protein atg6 (atg6).